We begin with the raw amino-acid sequence, 685 residues long: Translation initiation factor IF-2 (685 aa).

One can recognise a tr-type G domain in the interval 185–354 (KRPPVVTVMG…LLTAEMQELK (170 aa)). The segment at 194-201 (GHVDHGKT) is G1. 194 to 201 (GHVDHGKT) lines the GTP pocket. The G2 stretch occupies residues 219-223 (GITQH). The G3 stretch occupies residues 240 to 243 (DTPG). GTP is bound by residues 240–244 (DTPGH) and 294–297 (NKMD). The G4 stretch occupies residues 294-297 (NKMD). The segment at 330–332 (SAH) is G5.

The protein belongs to the TRAFAC class translation factor GTPase superfamily. Classic translation factor GTPase family. IF-2 subfamily.

It is found in the cytoplasm. One of the essential components for the initiation of protein synthesis. Protects formylmethionyl-tRNA from spontaneous hydrolysis and promotes its binding to the 30S ribosomal subunits. Also involved in the hydrolysis of GTP during the formation of the 70S ribosomal complex. The sequence is that of Translation initiation factor IF-2 from Clostridium tetani (strain Massachusetts / E88).